A 266-amino-acid polypeptide reads, in one-letter code: MLYLTKIRNAESEFTGNEQKIADFLRARVSELKSVSSRQMAKQLGISQSSIVKFAQKLGAQGFTELRMALIGEYSASREKTNATALHLHSSITSDDSLEVIARKLNREKELALEQTCALFDYARLQKIIEVISKAPFIQITGLGGSALVGRDLSFKLMKIGYRVACEADTHVQATVSQALKKGDVQIAISYSGSKKEIVLCAEAARKQGATVIAITSLADSPLRRLAHFTLDTVSGETEWRSSSMSTRTAQNSVTDLLFVGLVQHQ.

Residues 1–77 enclose the HTH rpiR-type domain; that stretch reads MLYLTKIRNA…MALIGEYSAS (77 aa). Positions 37-56 form a DNA-binding region, H-T-H motif; that stretch reads SRQMAKQLGISQSSIVKFAQ. The 139-residue stretch at 128 to 266 folds into the SIS domain; the sequence is IIEVISKAPF…LLFVGLVQHQ (139 aa).

In terms of assembly, homotetramer.

The protein operates within amino-sugar metabolism; N-acetylmuramate degradation [regulation]. In terms of biological role, represses the expression of the murPQ operon involved in the uptake and degradation of N-acetylmuramic acid (MurNAc). Binds to two adjacent inverted repeats within the operator region. MurNAc 6-phosphate, the substrate of MurQ, is the specific inducer that weakens binding of MurR to the operator. The sequence is that of HTH-type transcriptional regulator MurR from Shigella flexneri serotype 5b (strain 8401).